A 371-amino-acid chain; its full sequence is Putative F-box/kelch-repeat protein At3g10510 (371 aa).

One can recognise an F-box domain in the interval 13-61 (SVMTSIPDDVIMECIAPRVPRYNHSMLSLVSKQFRSLVASPRLYKTRSL). Kelch repeat units lie at residues 123 to 165 (NIFV…DMPV), 178 to 229 (KIYI…GPSS), and 257 to 305 (NECV…YIVS).

This chain is Putative F-box/kelch-repeat protein At3g10510, found in Arabidopsis thaliana (Mouse-ear cress).